A 281-amino-acid chain; its full sequence is NADPH-dependent 7-cyano-7-deazaguanine reductase (281 aa).

88-90 contributes to the substrate binding site; sequence IES. 90–91 serves as a coordination point for NADPH; sequence SK. Residue Cys189 is the Thioimide intermediate of the active site. Asp196 functions as the Proton donor in the catalytic mechanism. 228–229 contributes to the substrate binding site; the sequence is HE. 257 to 258 serves as a coordination point for NADPH; sequence RG.

It belongs to the GTP cyclohydrolase I family. QueF type 2 subfamily. As to quaternary structure, homodimer.

It is found in the cytoplasm. The catalysed reaction is 7-aminomethyl-7-carbaguanine + 2 NADP(+) = 7-cyano-7-deazaguanine + 2 NADPH + 3 H(+). Its pathway is tRNA modification; tRNA-queuosine biosynthesis. Functionally, catalyzes the NADPH-dependent reduction of 7-cyano-7-deazaguanine (preQ0) to 7-aminomethyl-7-deazaguanine (preQ1). The protein is NADPH-dependent 7-cyano-7-deazaguanine reductase of Yersinia pseudotuberculosis serotype O:1b (strain IP 31758).